Reading from the N-terminus, the 465-residue chain is MAP kinase-interacting serine/threonine-protein kinase 1 (465 aa).

The segment covering 1–11 (MVSSQKLEKPI) has biased composition (basic and acidic residues). A disordered region spans residues 1–40 (MVSSQKLEKPIEMGSSEPLPIADGDRRRKKKRRGRATDSL). The residue at position 39 (serine 39) is a Phosphoserine. In terms of domain architecture, Protein kinase spans 49 to 374 (KLTSELLGEG…AAQVLQHPWV (326 aa)). Residues 55–63 (LGEGAYAKV) and lysine 78 each bind ATP. Residues 185-203 (APTSLGSSDPPTSASQVAG) are compositionally biased toward polar residues. The tract at residues 185–204 (APTSLGSSDPPTSASQVAGT) is disordered. Aspartate 211 (proton acceptor) is an active-site residue. A phosphoserine mark is found at serine 221 and serine 226. 3 positions are modified to phosphothreonine: threonine 250, threonine 255, and threonine 385. Residues 446–465 (RRRALAQAGRGEDRSPPTAL) are disordered. Basic and acidic residues predominate over residues 455-465 (RGEDRSPPTAL). Serine 460 bears the Phosphoserine mark.

Belongs to the protein kinase superfamily. CAMK Ser/Thr protein kinase family. As to quaternary structure, interacts with the C-terminal regions of EIF4G1 and EIF4G2. Also binds to dephosphorylated ERK1 and ERK2, and to the p38 kinases. It depends on Mg(2+) as a cofactor. Post-translationally, dual phosphorylation of Thr-250 and Thr-255 activates the kinase. Phosphorylation of Thr-385 activates the kinase. MAPK3/ERK1 is one of the kinases which activate MKNK1/MNK1. Phosphorylation by PAK2 leads to a reduced phosphorylation of EIF4G1. Ubiquitous.

It is found in the cytoplasm. Its subcellular location is the nucleus. It carries out the reaction L-seryl-[protein] + ATP = O-phospho-L-seryl-[protein] + ADP + H(+). It catalyses the reaction L-threonyl-[protein] + ATP = O-phospho-L-threonyl-[protein] + ADP + H(+). With respect to regulation, phosphorylated and activated by the p38 kinases and kinases in the Erk pathway. Functionally, may play a role in the response to environmental stress and cytokines. Appears to regulate translation by phosphorylating EIF4E, thus increasing the affinity of this protein for the 7-methylguanosine-containing mRNA cap. This Homo sapiens (Human) protein is MAP kinase-interacting serine/threonine-protein kinase 1 (MKNK1).